Here is a 448-residue protein sequence, read N- to C-terminus: Trigger factor (448 aa).

Residues 163–248 (GDIVVIDFDG…VKDIRVPKAA (86 aa)) form the PPIase FKBP-type domain.

This sequence belongs to the FKBP-type PPIase family. Tig subfamily.

Its subcellular location is the cytoplasm. The enzyme catalyses [protein]-peptidylproline (omega=180) = [protein]-peptidylproline (omega=0). In terms of biological role, involved in protein export. Acts as a chaperone by maintaining the newly synthesized protein in an open conformation. Functions as a peptidyl-prolyl cis-trans isomerase. In Rhodospirillum centenum (strain ATCC 51521 / SW), this protein is Trigger factor.